Consider the following 140-residue polypeptide: Sec-independent protein translocase protein TatB (140 aa).

The chain crosses the membrane as a helical span at residues 2–22 (LPGIGFSELLLIGLAALIIIG). Residues 90-140 (VNSAVMREHPVSPPPPATPPAPPAELPPEAAPHADSQNAPPEADPAKGDRT) are disordered. Pro residues predominate over residues 100-119 (VSPPPPATPPAPPAELPPEA).

Belongs to the TatB family. The Tat system comprises two distinct complexes: a TatABC complex, containing multiple copies of TatA, TatB and TatC subunits, and a separate TatA complex, containing only TatA subunits. Substrates initially bind to the TatABC complex, which probably triggers association of the separate TatA complex to form the active translocon.

It localises to the cell inner membrane. In terms of biological role, part of the twin-arginine translocation (Tat) system that transports large folded proteins containing a characteristic twin-arginine motif in their signal peptide across membranes. Together with TatC, TatB is part of a receptor directly interacting with Tat signal peptides. TatB may form an oligomeric binding site that transiently accommodates folded Tat precursor proteins before their translocation. This Hyphomonas neptunium (strain ATCC 15444) protein is Sec-independent protein translocase protein TatB.